Reading from the N-terminus, the 632-residue chain is 2-hydroxyacyl-CoA lyase 2 (632 aa).

The helical transmembrane segment at 13-33 (FFPSFLLLAFGTLVAAVLGVA) threads the bilayer. Residue Glu98 coordinates thiamine diphosphate. Ser369 bears the Phosphoserine mark. The thiamine pyrophosphate binding stretch occupies residues 470-550 (DFVATAAYLV…VIALVGNDAG (81 aa)). 2 residues coordinate Mg(2+): Asp521 and Asn547.

The protein belongs to the TPP enzyme family. Mg(2+) serves as cofactor. Thiamine diphosphate is required as a cofactor.

It localises to the endoplasmic reticulum membrane. It catalyses the reaction 2-hydroxyoctadecanoyl-CoA = heptadecanal + formyl-CoA. The catalysed reaction is (2R)-hydroxyhexadecanoyl-CoA = pentadecanal + formyl-CoA. In terms of biological role, endoplasmic reticulum 2-OH acyl-CoA lyase involved in the cleavage (C1 removal) reaction in the fatty acid alpha-oxydation in a thiamine pyrophosphate (TPP)-dependent manner. Involved in the phytosphingosine degradation pathway. In Mus musculus (Mouse), this protein is 2-hydroxyacyl-CoA lyase 2 (Ilvbl).